The following is a 524-amino-acid chain: Acetyl-CoA decarbonylase/synthase complex subunit beta (524 aa).

Residues cysteine 212, cysteine 215, cysteine 301, and cysteine 303 each coordinate [Ni-Fe-S] cluster. A disordered region spans residues 436 to 466 (WVEEEEEEAEEVAEEAAAEAAPAAQPAQAAQ). A compositionally biased stretch (acidic residues) spans 437–452 (VEEEEEEAEEVAEEAA). Residues 453–466 (AEAAPAAQPAQAAQ) show a composition bias toward low complexity.

It belongs to the CdhC family. As to quaternary structure, monomer. The ACDS complex is made up of alpha, epsilon, beta, gamma and delta chains with a probable stoichiometry of (alpha(2)epsilon(2))(4)-beta(8)-(gamma(1)delta(1))(8). [Ni-Fe-S] cluster is required as a cofactor.

It catalyses the reaction Co(I)-[corrinoid Fe-S protein] + acetyl-CoA + H(+) = methyl-Co(III)-[corrinoid Fe-S protein] + CO + CoA. Part of a complex that catalyzes the reversible cleavage of acetyl-CoA, allowing autotrophic growth from CO(2). The alpha-epsilon complex generates CO from CO(2), while the beta subunit (this protein) combines the CO with CoA and a methyl group to form acetyl-CoA. The methyl group, which is incorporated into acetyl-CoA, is transferred to the beta subunit by a corrinoid iron-sulfur protein (the gamma-delta complex). The protein is Acetyl-CoA decarbonylase/synthase complex subunit beta of Archaeoglobus fulgidus (strain ATCC 49558 / DSM 4304 / JCM 9628 / NBRC 100126 / VC-16).